Here is a 738-residue protein sequence, read N- to C-terminus: Vesicle-fusing ATPase (738 aa).

Residues 507–512 (NGIINY) and 547–554 (PGCGKSSL) contribute to the ATP site.

It belongs to the AAA ATPase family. Interacts with syn7A, snpA and snpC. Mg(2+) serves as cofactor.

It localises to the cytoplasmic vesicle membrane. The protein localises to the endosome membrane. The enzyme catalyses ATP + H2O = ADP + phosphate + H(+). Its function is as follows. Required for vesicle-mediated transport. Involved in endocytosis and endosome-endosome fusion. May be required for transport from the endoplasmic reticulum to the Golgi stack, and for the fusion of transport vesicles within the Golgi cisternae. Required for cell polarity, locomotion and chemotaxis. This is Vesicle-fusing ATPase (nsfA) from Dictyostelium discoideum (Social amoeba).